Consider the following 90-residue polypeptide: Co-chaperonin GroES (90 aa).

This sequence belongs to the GroES chaperonin family. As to quaternary structure, heptamer of 7 subunits arranged in a ring. Interacts with the chaperonin GroEL.

The protein localises to the cytoplasm. In terms of biological role, together with the chaperonin GroEL, plays an essential role in assisting protein folding. The GroEL-GroES system forms a nano-cage that allows encapsulation of the non-native substrate proteins and provides a physical environment optimized to promote and accelerate protein folding. GroES binds to the apical surface of the GroEL ring, thereby capping the opening of the GroEL channel. In Thermosipho melanesiensis (strain DSM 12029 / CIP 104789 / BI429), this protein is Co-chaperonin GroES.